The primary structure comprises 489 residues: Interferon gamma receptor 1 (489 aa).

The first 17 residues, 1–17 (MALLFLLPLVMQGVSRA), serve as a signal peptide directing secretion. The Extracellular segment spans residues 18-245 (EMGTADLGPS…ITIFNSSIKG (228 aa)). 3 N-linked (GlcNAc...) asparagine glycosylation sites follow: Asn-34, Asn-79, and Asn-86. An intrachain disulfide couples Cys-77 to Cys-85. Cysteines 122 and 167 form a disulfide. N-linked (GlcNAc...) asparagine glycosylation is present at Asn-179. Cystine bridges form between Cys-195–Cys-200 and Cys-214–Cys-235. An N-linked (GlcNAc...) asparagine glycan is attached at Asn-240. Residues 246–266 (SLWIPVVAALLLFLVLSLVFI) form a helical membrane-spanning segment. Over 267-489 (CFYIKKINPL…RPTEDSKEFS (223 aa)) the chain is Cytoplasmic. A disordered region spans residues 329-437 (ATVPGMHTED…SEFPPNNKGE (109 aa)). Positions 335-348 (HTEDNPGKVEHTEE) are enriched in basic and acidic residues. Positions 349-360 (LSSITEVVTTEE) are enriched in polar residues. Ser-369 is modified (phosphoserine). Thr-372 bears the Phosphothreonine mark. Ser-378 bears the Phosphoserine mark. Positions 379–391 (SSPLSSNQSEPGS) are enriched in low complexity. Residues 401-412 (NCSESDHSRNGF) are compositionally biased toward basic and acidic residues. Ser-403 carries the phosphoserine modification. Residues 415–429 (DSSCLESHSSLSDSE) show a composition bias toward low complexity. Tyr-457 carries the post-translational modification Phosphotyrosine.

This sequence belongs to the type II cytokine receptor family. As to quaternary structure, monomer. Heterodimer with IFNGR2, to form the IFNG receptor complex. Interacts with JAK1. Interacts (when phosphorylated) with STAT1. Interacts with SOCS1. Phosphorylated at Ser/Thr residues. Phosphorylation of Tyr-457 is required for IFNG receptor signal transduction. Influenza virus infection leads to phosphorylation in a CSNK1A1-dependent manner. In terms of processing, ubiquitinated after phosphorylation in a CSNK1A1-dependent manner, leading to the lysosome-dependent degradation. Proteasomally degraded through 'Lys-48'-mediated ubiquitination. Ubiquitination is necessary for efficient IFNGR1 signaling.

The protein resides in the cell membrane. In terms of biological role, receptor subunit for interferon gamma/INFG that plays crucial roles in antimicrobial, antiviral, and antitumor responses by activating effector immune cells and enhancing antigen presentation. Associates with transmembrane accessory factor IFNGR2 to form a functional receptor. Upon ligand binding, the intracellular domain of IFNGR1 opens out to allow association of downstream signaling components JAK1 and JAK2. In turn, activated JAK1 phosphorylates IFNGR1 to form a docking site for STAT1. Subsequent phosphorylation of STAT1 leads to dimerization, translocation to the nucleus, and stimulation of target gene transcription. STAT3 can also be activated in a similar manner although activation seems weaker. IFNGR1 intracellular domain phosphorylation also provides a docking site for SOCS1 that regulates the JAK-STAT pathway by competing with STAT1 binding to IFNGR1. This Homo sapiens (Human) protein is Interferon gamma receptor 1.